We begin with the raw amino-acid sequence, 204 residues long: uncharacterized protein (204 aa).

The N-terminal stretch at 1-17 is a signal peptide; that stretch reads MKRLVTGLLALSLFLAA. A disordered region spans residues 17–100; that stretch reads ACGQDSDQQK…NNNQANNNQK (84 aa). Residue Cys-18 is the site of N-palmitoyl cysteine attachment. Cys-18 carries the S-diacylglycerol cysteine lipid modification. Positions 23–70 are enriched in basic and acidic residues; that stretch reads DQQKDGNKEKDDKAKTEQQDKKTNDSSKDKKDNKDDSKDVNKDNKDNS. Low complexity predominate over residues 71 to 100; it reads ANDNQQQSNSNATNNDQNQTNNNQANNNQK.

It localises to the cell membrane. This is an uncharacterized protein from Staphylococcus aureus (strain MSSA476).